Here is a 621-residue protein sequence, read N- to C-terminus: Phosphoenolpyruvate carboxykinase [GTP] (621 aa).

Substrate-binding positions include Arg83 and 217 to 219; that span reads YGG. Positions 226 and 245 each coordinate Mn(2+). Substrate is bound at residue Ser267. 268–273 serves as a coordination point for GTP; the sequence is MCGKTS. Cys269 is an active-site residue. Asp286 lines the Mn(2+) pocket. Residue 381 to 383 participates in substrate binding; it reads NAR. Residues Arg383 and Arg415 each coordinate GTP.

The protein belongs to the phosphoenolpyruvate carboxykinase [GTP] family. The cofactor is Mn(2+).

It is found in the cytoplasm. The catalysed reaction is oxaloacetate + GTP = phosphoenolpyruvate + GDP + CO2. The protein operates within carbohydrate biosynthesis; gluconeogenesis. In terms of biological role, catalyzes the conversion of oxaloacetate (OAA) to phosphoenolpyruvate (PEP), the rate-limiting step in the metabolic pathway that produces glucose from lactate and other precursors derived from the citric acid cycle. This chain is Phosphoenolpyruvate carboxykinase [GTP], found in Pyrococcus horikoshii (strain ATCC 700860 / DSM 12428 / JCM 9974 / NBRC 100139 / OT-3).